Consider the following 399-residue polypeptide: S-adenosylmethionine synthase (399 aa).

An ATP-binding site is contributed by histidine 17. Aspartate 19 is a Mg(2+) binding site. Residue glutamate 45 participates in K(+) binding. L-methionine contacts are provided by glutamate 58 and glutamine 101. A flexible loop region spans residues 101 to 111 (QSADIAMGVDQ). Residues 177–179 (DGK), 244–245 (RF), aspartate 253, 259–260 (RK), alanine 276, and lysine 280 each bind ATP. Aspartate 253 contributes to the L-methionine binding site. Lysine 284 is a binding site for L-methionine.

It belongs to the AdoMet synthase family. As to quaternary structure, homotetramer; dimer of dimers. Mg(2+) is required as a cofactor. K(+) serves as cofactor.

It is found in the cytoplasm. It catalyses the reaction L-methionine + ATP + H2O = S-adenosyl-L-methionine + phosphate + diphosphate. It functions in the pathway amino-acid biosynthesis; S-adenosyl-L-methionine biosynthesis; S-adenosyl-L-methionine from L-methionine: step 1/1. Its function is as follows. Catalyzes the formation of S-adenosylmethionine (AdoMet) from methionine and ATP. The overall synthetic reaction is composed of two sequential steps, AdoMet formation and the subsequent tripolyphosphate hydrolysis which occurs prior to release of AdoMet from the enzyme. This chain is S-adenosylmethionine synthase, found in Bacillus anthracis (strain A0248).